The sequence spans 245 residues: Triosephosphate isomerase (245 aa).

Residue 9–11 (NWK) coordinates substrate. Catalysis depends on His-92, which acts as the Electrophile. Glu-164 serves as the catalytic Proton acceptor. Residues Gly-170, Ser-209, and 230-231 (GG) each bind substrate.

It belongs to the triosephosphate isomerase family. Homodimer.

The protein localises to the cytoplasm. The enzyme catalyses D-glyceraldehyde 3-phosphate = dihydroxyacetone phosphate. It functions in the pathway carbohydrate biosynthesis; gluconeogenesis. The protein operates within carbohydrate degradation; glycolysis; D-glyceraldehyde 3-phosphate from glycerone phosphate: step 1/1. Its function is as follows. Involved in the gluconeogenesis. Catalyzes stereospecifically the conversion of dihydroxyacetone phosphate (DHAP) to D-glyceraldehyde-3-phosphate (G3P). The chain is Triosephosphate isomerase from Cupriavidus pinatubonensis (strain JMP 134 / LMG 1197) (Cupriavidus necator (strain JMP 134)).